We begin with the raw amino-acid sequence, 436 residues long: Retinoic acid receptor RXR (436 aa).

The disordered stretch occupies residues 1 to 108 (MDRSEGMDTL…GPSPSPGLPH (108 aa)). Positions 1–116 (MDRSEGMDTL…PHSSLHTKHI (116 aa)) are modulating. Over residues 13–22 (SMPSGMSMGM) the composition is skewed to low complexity. Polar residues-rich tracts occupy residues 40–49 (SSLTSPTSTH) and 62–76 (MASS…QQMH). Over residues 85 to 98 (SSMGSPPMLCLSPS) the composition is skewed to low complexity. 2 NR C4-type zinc fingers span residues 117 to 137 (CAIC…CEGC) and 153 to 172 (CRDD…CQYC). Positions 117 to 182 (CAICGDRASG…RYMKCLSMGM (66 aa)) form a DNA-binding region, nuclear receptor. Residues 183 to 206 (KREAVQEERQRVKEKGDGEVESTS) are hinge. The span at 189-200 (EERQRVKEKGDG) shows a compositional bias: basic and acidic residues. Residues 189-209 (EERQRVKEKGDGEVESTSGAN) are disordered. The 224-residue stretch at 209-432 (NNDMPVEQIL…TFLMEMLENP (224 aa)) folds into the NR LBD domain. Residues Arg-290 and Ala-301 each contribute to the 9-cis-retinoate site.

It belongs to the nuclear hormone receptor family. NR2 subfamily. In terms of assembly, homodimer (via ligand-binding domain). Heterodimer. Homotetramer consisting of 2 canonical homodimers. Within the tetramer, each monomer binds one molecule of 9C-RA and a NCOA1-derived peptide containing an L-X(2)-L-L motif.

The protein localises to the nucleus. In terms of biological role, ligand-dependent transcription factor probably involved in the retinoic acid response pathway. Binds 9-cis-retinoic acid (9C-RA) and, to a lesser extent, docosahexaenoic acid (DHA), phytanic acid, methoprene acid and oleic acid. Binds to double-stranded DNA sequences containing direct repeats (DR) with the consensus sequence 5'-[AG]GGTCA-3' and 1, 2, 3, 4 or 5 nucleotides in between (DR1, DR2, DR3. DR4 and DR5, respectively). Binding to DR1 is strongest. Transactivates gene expression when 9C-RA or DHA is bound. This Biomphalaria glabrata (Bloodfluke planorb) protein is Retinoic acid receptor RXR.